The sequence spans 347 residues: Protein RecA (347 aa).

67-74 (GPESSGKT) contributes to the ATP binding site.

The protein belongs to the RecA family.

It localises to the cytoplasm. In terms of biological role, can catalyze the hydrolysis of ATP in the presence of single-stranded DNA, the ATP-dependent uptake of single-stranded DNA by duplex DNA, and the ATP-dependent hybridization of homologous single-stranded DNAs. It interacts with LexA causing its activation and leading to its autocatalytic cleavage. This Helicobacter acinonychis (strain Sheeba) protein is Protein RecA.